The following is a 281-amino-acid chain: sn-glycerol-3-phosphate transport system permease protein UgpE (281 aa).

The next 6 membrane-spanning stretches (helical) occupy residues 16 to 36 (LILG…AATL), 85 to 105 (FSIT…IVWF), 113 to 133 (FFWM…FPTV), 142 to 162 (LDSY…TFLF), 202 to 222 (ALFV…LLII), and 247 to 267 (WNSV…IVLV). In terms of domain architecture, ABC transmembrane type-1 spans 77–268 (LLNSFVMAFS…IPPVVIVLVM (192 aa)).

Belongs to the binding-protein-dependent transport system permease family. UgpAE subfamily. As to quaternary structure, the complex is composed of two ATP-binding proteins (UgpC), two transmembrane proteins (UgpA and UgpE) and a solute-binding protein (UgpB).

It is found in the cell inner membrane. In terms of biological role, part of the ABC transporter complex UgpBAEC involved in sn-glycerol-3-phosphate (G3P) import. Probably responsible for the translocation of the substrate across the membrane. In Escherichia coli O6:K15:H31 (strain 536 / UPEC), this protein is sn-glycerol-3-phosphate transport system permease protein UgpE (ugpE).